The chain runs to 402 residues: MTMMSDLSQDLLEEILSRVPRTSLGAVRSTCKRWNTLFKDRILCKAEETRDQFRFIMKKYKLCSMRFDLNGTLNEDGGTEFVDPSIKELGHFFNQVKISKVFQCDGLLLCVTKEDNIRLVVWNPYLGQIRWIESGNTNYRLFDRYAIGYDNNRKHKILRFLEYYNFNMKHRFLEYEIYDFSSNSWRVLDIAPRWEIESYQRGASLKGNTYFIAKEKIEYEEDGEFPEPADNLLCFDFTTESFGQFLPLPFQHYLYDVGALSSLGDEKLAALFQCGDTDLSEVEIWVTTLTETNTVSWNPFLKVDMEPHYGRSFMFDYYGGSFFIDEEKKLAVVFQFDESGMTRYEDATYIIGENGYVKKVRLGEAPANQGGYCFPSVCFSSYVPSLVQINQIVGFKKEREEE.

Residues 1 to 56 enclose the F-box domain; sequence MTMMSDLSQDLLEEILSRVPRTSLGAVRSTCKRWNTLFKDRILCKAEETRDQFRFI.

The chain is Putative F-box protein At3g20030 from Arabidopsis thaliana (Mouse-ear cress).